The sequence spans 204 residues: Guanylate kinase (204 aa).

The region spanning 5–184 is the Guanylate kinase-like domain; the sequence is GLLLVLSGPS…AVNHIKAIVD (180 aa). 12–19 contacts ATP; sequence GPSGVGKG.

It belongs to the guanylate kinase family.

It localises to the cytoplasm. The enzyme catalyses GMP + ATP = GDP + ADP. Its function is as follows. Essential for recycling GMP and indirectly, cGMP. The sequence is that of Guanylate kinase from Lactobacillus delbrueckii subsp. bulgaricus (strain ATCC 11842 / DSM 20081 / BCRC 10696 / JCM 1002 / NBRC 13953 / NCIMB 11778 / NCTC 12712 / WDCM 00102 / Lb 14).